Here is a 238-residue protein sequence, read N- to C-terminus: Acyl-protein thioesterase 1 (238 aa).

Residues Ser-120, Asp-174, and His-219 each act as charge relay system in the active site.

The protein belongs to the AB hydrolase superfamily. AB hydrolase 2 family.

It localises to the cytoplasm. The protein localises to the nucleus. It catalyses the reaction S-hexadecanoyl-L-cysteinyl-[protein] + H2O = L-cysteinyl-[protein] + hexadecanoate + H(+). Functionally, hydrolyzes fatty acids from S-acylated cysteine residues in proteins with a strong preference for palmitoylated G-alpha proteins over other acyl substrates. Mediates the deacylation of G-alpha proteins such as GPA1 in vivo, but has weak or no activity toward palmitoylated Ras proteins. Has weak lysophospholipase activity in vitro; however such activity may not exist in vivo. The sequence is that of Acyl-protein thioesterase 1 from Cryptococcus neoformans var. neoformans serotype D (strain B-3501A) (Filobasidiella neoformans).